Here is a 102-residue protein sequence, read N- to C-terminus: Large ribosomal subunit protein bL21 (102 aa).

It belongs to the bacterial ribosomal protein bL21 family. As to quaternary structure, part of the 50S ribosomal subunit. Contacts protein L20.

In terms of biological role, this protein binds to 23S rRNA in the presence of protein L20. This chain is Large ribosomal subunit protein bL21, found in Clavibacter sepedonicus (Clavibacter michiganensis subsp. sepedonicus).